Reading from the N-terminus, the 496-residue chain is Cobyric acid synthase (496 aa).

Residues 256–444 (KINIAVVLLR…IHGILDNQAF (189 aa)) form the GATase cobBQ-type domain. The active-site Nucleophile is Cys-337. The active site involves His-436.

It belongs to the CobB/CobQ family. CobQ subfamily.

It participates in cofactor biosynthesis; adenosylcobalamin biosynthesis. Its function is as follows. Catalyzes amidations at positions B, D, E, and G on adenosylcobyrinic A,C-diamide. NH(2) groups are provided by glutamine, and one molecule of ATP is hydrogenolyzed for each amidation. The polypeptide is Cobyric acid synthase (Phocaeicola vulgatus (strain ATCC 8482 / DSM 1447 / JCM 5826 / CCUG 4940 / NBRC 14291 / NCTC 11154) (Bacteroides vulgatus)).